We begin with the raw amino-acid sequence, 102 residues long: Small ribosomal subunit protein uS10 (102 aa).

It belongs to the universal ribosomal protein uS10 family. In terms of assembly, part of the 30S ribosomal subunit.

In terms of biological role, involved in the binding of tRNA to the ribosomes. This Streptococcus sanguinis (strain SK36) protein is Small ribosomal subunit protein uS10.